Here is a 240-residue protein sequence, read N- to C-terminus: 1-(5-phosphoribosyl)-5-[(5-phosphoribosylamino)methylideneamino] imidazole-4-carboxamide isomerase (240 aa).

Catalysis depends on D8, which acts as the Proton acceptor. D129 acts as the Proton donor in catalysis.

This sequence belongs to the HisA/HisF family.

It is found in the cytoplasm. The catalysed reaction is 1-(5-phospho-beta-D-ribosyl)-5-[(5-phospho-beta-D-ribosylamino)methylideneamino]imidazole-4-carboxamide = 5-[(5-phospho-1-deoxy-D-ribulos-1-ylimino)methylamino]-1-(5-phospho-beta-D-ribosyl)imidazole-4-carboxamide. It functions in the pathway amino-acid biosynthesis; L-histidine biosynthesis; L-histidine from 5-phospho-alpha-D-ribose 1-diphosphate: step 4/9. In Oceanobacillus iheyensis (strain DSM 14371 / CIP 107618 / JCM 11309 / KCTC 3954 / HTE831), this protein is 1-(5-phosphoribosyl)-5-[(5-phosphoribosylamino)methylideneamino] imidazole-4-carboxamide isomerase.